The chain runs to 272 residues: Undecaprenyl-diphosphatase (272 aa).

The next 8 helical transmembrane spans lie at 4-24, 45-65, 89-109, 115-135, 152-174, 189-209, 225-245, and 251-271; these read IHSL…EFLP, AETF…VMFW, LTLG…LVFH, LFNP…LIAA, TYRQ…FSRS, YAAS…ATAL, MFAV…KTFL, and ISFI…YVVF.

The protein belongs to the UppP family.

The protein localises to the cell inner membrane. It catalyses the reaction di-trans,octa-cis-undecaprenyl diphosphate + H2O = di-trans,octa-cis-undecaprenyl phosphate + phosphate + H(+). Functionally, catalyzes the dephosphorylation of undecaprenyl diphosphate (UPP). Confers resistance to bacitracin. This Citrobacter koseri (strain ATCC BAA-895 / CDC 4225-83 / SGSC4696) protein is Undecaprenyl-diphosphatase.